Consider the following 100-residue polypeptide: Urease subunit gamma (100 aa).

It belongs to the urease gamma subunit family. As to quaternary structure, heterotrimer of UreA (gamma), UreB (beta) and UreC (alpha) subunits. Three heterotrimers associate to form the active enzyme.

It is found in the cytoplasm. It catalyses the reaction urea + 2 H2O + H(+) = hydrogencarbonate + 2 NH4(+). It functions in the pathway nitrogen metabolism; urea degradation; CO(2) and NH(3) from urea (urease route): step 1/1. This chain is Urease subunit gamma, found in Picosynechococcus sp. (strain ATCC 27264 / PCC 7002 / PR-6) (Agmenellum quadruplicatum).